The chain runs to 215 residues: Adenylate kinase (215 aa).

ATP is bound at residue 10 to 15; it reads GAGKGT. The tract at residues 30–59 is NMP; that stretch reads STGDMFRAAMKNETEMGKLAKSFIDKGELV. AMP-binding positions include Thr31, Arg36, 57 to 59, 86 to 89, and Gln93; these read ELV and GYPR. The segment at 127-165 is LID; that stretch reads GRYICRNCGATYHKIFNPTKVEGTCDVCGSHDLYQRADD. ATP is bound at residue Arg128. Zn(2+) is bound by residues Cys131 and Cys134. 137–138 provides a ligand contact to ATP; sequence TY. The Zn(2+) site is built by Cys151 and Cys154. Residues Arg162 and Arg173 each coordinate AMP. Gln201 contacts ATP.

It belongs to the adenylate kinase family. Monomer.

Its subcellular location is the cytoplasm. It carries out the reaction AMP + ATP = 2 ADP. It participates in purine metabolism; AMP biosynthesis via salvage pathway; AMP from ADP: step 1/1. Its function is as follows. Catalyzes the reversible transfer of the terminal phosphate group between ATP and AMP. Plays an important role in cellular energy homeostasis and in adenine nucleotide metabolism. The chain is Adenylate kinase from Lactococcus lactis subsp. cremoris (strain SK11).